Consider the following 275-residue polypeptide: 4-deoxy-L-threo-5-hexosulose-uronate ketol-isomerase (275 aa).

H193, H195, E200, and H242 together coordinate Zn(2+).

This sequence belongs to the KduI family. Requires Zn(2+) as cofactor.

It catalyses the reaction 5-dehydro-4-deoxy-D-glucuronate = 3-deoxy-D-glycero-2,5-hexodiulosonate. It participates in glycan metabolism; pectin degradation; 2-dehydro-3-deoxy-D-gluconate from pectin: step 4/5. Its function is as follows. Catalyzes the isomerization of 5-dehydro-4-deoxy-D-glucuronate to 3-deoxy-D-glycero-2,5-hexodiulosonate. This is 4-deoxy-L-threo-5-hexosulose-uronate ketol-isomerase from Bacillus pumilus (strain SAFR-032).